Here is a 244-residue protein sequence, read N- to C-terminus: Glutathione S-transferase theta-2 (244 aa).

Positions 2–82 (GLELFLDLVS…YLSCKYQTPD (81 aa)) constitute a GST N-terminal domain. Residues 40–41 (HK), 53–54 (KL), 66–67 (ES), and 104–107 (DCIR) contribute to the glutathione site. A GST C-terminal domain is found at 88 to 224 (DLQARARVHE…SILEQAAKKT (137 aa)).

Belongs to the GST superfamily. Theta family. In terms of assembly, homodimer. As to expression, expressed at low levels in liver. In lung, expressed at low levels in ciliated bronchiolar cells, alveolar macrophages and alveolar type II cells.

The protein resides in the cytoplasm. It is found in the cytosol. The protein localises to the nucleus. The catalysed reaction is RX + glutathione = an S-substituted glutathione + a halide anion + H(+). Conjugation of reduced glutathione to a wide number of exogenous and endogenous hydrophobic electrophiles. Has a sulfatase activity. This is Glutathione S-transferase theta-2 (GSTT2) from Homo sapiens (Human).